Consider the following 290-residue polypeptide: Bifunctional protein FolD (290 aa).

Residues 165-167, S190, and I231 each bind NADP(+); that span reads GRS.

Belongs to the tetrahydrofolate dehydrogenase/cyclohydrolase family. Homodimer.

It carries out the reaction (6R)-5,10-methylene-5,6,7,8-tetrahydrofolate + NADP(+) = (6R)-5,10-methenyltetrahydrofolate + NADPH. It catalyses the reaction (6R)-5,10-methenyltetrahydrofolate + H2O = (6R)-10-formyltetrahydrofolate + H(+). The protein operates within one-carbon metabolism; tetrahydrofolate interconversion. Its function is as follows. Catalyzes the oxidation of 5,10-methylenetetrahydrofolate to 5,10-methenyltetrahydrofolate and then the hydrolysis of 5,10-methenyltetrahydrofolate to 10-formyltetrahydrofolate. The protein is Bifunctional protein FolD of Aromatoleum aromaticum (strain DSM 19018 / LMG 30748 / EbN1) (Azoarcus sp. (strain EbN1)).